The following is a 171-amino-acid chain: 3-hydroxydecanoyl-[acyl-carrier-protein] dehydratase (171 aa).

His-70 is an active-site residue.

Belongs to the thioester dehydratase family. FabA subfamily. As to quaternary structure, homodimer.

The protein localises to the cytoplasm. It carries out the reaction a (3R)-hydroxyacyl-[ACP] = a (2E)-enoyl-[ACP] + H2O. The catalysed reaction is (3R)-hydroxydecanoyl-[ACP] = (2E)-decenoyl-[ACP] + H2O. It catalyses the reaction (2E)-decenoyl-[ACP] = (3Z)-decenoyl-[ACP]. The protein operates within lipid metabolism; fatty acid biosynthesis. Functionally, necessary for the introduction of cis unsaturation into fatty acids. Catalyzes the dehydration of (3R)-3-hydroxydecanoyl-ACP to E-(2)-decenoyl-ACP and then its isomerization to Z-(3)-decenoyl-ACP. Can catalyze the dehydratase reaction for beta-hydroxyacyl-ACPs with saturated chain lengths up to 16:0, being most active on intermediate chain length. This chain is 3-hydroxydecanoyl-[acyl-carrier-protein] dehydratase, found in Marinomonas sp. (strain MWYL1).